The following is a 283-amino-acid chain: Cyclic AMP-dependent transcription factor ATF-5 (283 aa).

Residues 1-21 (MSLLATLGLELDRALLPASGL) are required for protein stabilization induced by IL1B. Lys-29 is modified (N6-acetyllysine; by EP300). 2 disordered regions span residues 118 to 154 (DAPLLPPPSPPPPPPPAAAPSLPLPLPLPTFDLPQPP) and 168 to 241 (SEAG…EGEC). The tract at residues 119 to 218 (APLLPPPSPP…GDRKQKKRDQ (100 aa)) is interaction with PTP4A1. Pro residues-rich tracts occupy residues 121 to 145 (LLPPPSPPPPPPPAAAPSLPLPLPL) and 183 to 203 (PQQPPPLAPLPSPARPAPYPS). The bZIP domain occupies 209 to 272 (GDRKQKKRDQ…QYVKDLLIEV (64 aa)). The basic motif stretch occupies residues 211–231 (RKQKKRDQNKSAALRYRQRKR). Residues 237 to 251 (LEGECQGLEARNREL) form a leucine-zipper region. Residue Ser-257 is modified to Phosphoserine.

The protein belongs to the bZIP family. In terms of assembly, binds DNA as a dimer. Interacts with PTP4A1/PRL-1. Interacts with CCND3, but not with CCND1 or CCND2. Interacts with HSPA1A or HSPA1B; the interaction protects ATF5 from degradation via proteasome-dependent and caspase-dependent processes. Interacts (via C-terminal region) with NPM1 (via C-terminal region); the interaction leads to loss of association between HSPA1A or HSPA1B and ATF5 and promotes ATF5 degradation via proteasome-dependent and caspase-dependent processes. Interacts with NLK; the interaction stabilizes ATF5 at the protein level in a kinase-independent manner. Interacts with alpha-tubulin, gamma-tubulin members TUBGCP2 and TUBGCP4, PCNT; the ATF5:PCNT:polyglutamylated tubulin (PGT) tripartite unites the mother centriole and the pericentriolar material (PCM) in the centrosome. Interacts with CEBPB and EP300; EP300 is required for ATF5 and CEBPB interaction and DNA binding. In terms of processing, acetylated at Lys-29 by EP300, the acetylation enhances the interaction with CEBPB, DNA-binding and transactivation activity. Post-translationally, ubiquitinated by CDC34 and UBE2B in order to be degraded by the proteasome. Cisplatin inhibits ubiquitination and proteasome-mediated degradation by inhibiting the interaction with CDC34. Ubiquitination and degradation by the proteasome are inhibited by NLK in a kinase-independent manner. Phosphorylated by NLK, probably at Ser-92 and Ser-126. In terms of tissue distribution, highly expressed in liver and at lower levels in heart, brain, lung, kidney, adipose tissue, and skeletal muscle. Expressed in some immature and in all mature olfactory sensory neurons (at protein level).

The protein resides in the cytoplasm. It localises to the nucleus. The protein localises to the cytoskeleton. It is found in the microtubule organizing center. Its subcellular location is the centrosome. Functionally, transcription factor that either stimulates or represses gene transcription through binding of different DNA regulatory elements such as cAMP response element (CRE) (consensus: 5'-GTGACGT[AC][AG]-3'), ATF5-specific response element (ARE) (consensus: 5'-C[CT]TCT[CT]CCTT[AT]-3') but also the amino acid response element (AARE), present in many viral and cellular promoters. Critically involved, often in a cell type-dependent manner, in cell survival, proliferation, and differentiation. Its transcriptional activity is enhanced by CCND3 and slightly inhibited by CDK4. Important regulator of the cerebral cortex formation, functions in cerebral cortical neuroprogenitor cells to maintain proliferation and to block differentiation into neurons. Must be down-regulated in order for such cells to exit the cycle and differentiate. Participates in the pathways by which SHH promotes cerebellar granule neuron progenitor cells proliferation. Critical for survival of mature olfactory sensory neurons (OSN), directs expression of OSN-specific genes. May be involved in osteogenic differentiation. Promotes cell proliferation and survival by inducing the expression of EGR1 sinergistically with ELK1. Once acetylated by EP300, binds to ARE sequences on target genes promoters, such as BCL2 and EGR1. Plays an anti-apoptotic role through the transcriptional regulation of BCL2, this function seems to be cell type-dependent. Cooperates with NR1I3/CAR in the transcriptional activation of CYP2B6 in liver. In hepatic cells, represses CRE-dependent transcription and inhibits proliferation by blocking at G2/M phase. May act as a negative regulator of IL1B transduction pathway in liver. Upon IL1B stimulus, cooperates with NLK to activate the transactivation activity of C/EBP subfamily members. Besides its function of transcription factor, acts as a cofactor of CEBPB to activate CEBPA and promote adipocyte differentiation. Regulates centrosome dynamics in a cell-cycle- and centriole-age-dependent manner. Forms 9-foci symmetrical ring scaffold around the mother centriole to control centrosome function and the interaction between centrioles and pericentriolar material. This chain is Cyclic AMP-dependent transcription factor ATF-5 (Atf5), found in Mus musculus (Mouse).